We begin with the raw amino-acid sequence, 134 residues long: Large ribosomal subunit protein eL32 (134 aa).

The protein belongs to the eukaryotic ribosomal protein eL32 family.

The protein is Large ribosomal subunit protein eL32 (RPL32) of Tetrahymena thermophila (strain SB210).